Here is an 82-residue protein sequence, read N- to C-terminus: Cytochrome b559 subunit alpha (82 aa).

The chain crosses the membrane as a helical span at residues 21 to 35; it reads VIHSITIPALFIAGW. H23 contributes to the heme binding site.

Belongs to the PsbE/PsbF family. In terms of assembly, heterodimer of an alpha subunit and a beta subunit. PSII is composed of 1 copy each of membrane proteins PsbA, PsbB, PsbC, PsbD, PsbE, PsbF, PsbH, PsbI, PsbJ, PsbK, PsbL, PsbM, PsbT, PsbX, PsbY, PsbZ, Psb30/Ycf12, peripheral proteins PsbO, CyanoQ (PsbQ), PsbU, PsbV and a large number of cofactors. It forms dimeric complexes. The cofactor is heme b.

Its subcellular location is the cellular thylakoid membrane. Functionally, this b-type cytochrome is tightly associated with the reaction center of photosystem II (PSII). PSII is a light-driven water:plastoquinone oxidoreductase that uses light energy to abstract electrons from H(2)O, generating O(2) and a proton gradient subsequently used for ATP formation. It consists of a core antenna complex that captures photons, and an electron transfer chain that converts photonic excitation into a charge separation. The chain is Cytochrome b559 subunit alpha from Nostoc punctiforme (strain ATCC 29133 / PCC 73102).